A 133-amino-acid polypeptide reads, in one-letter code: ATP synthase epsilon chain, chloroplastic (133 aa).

The protein belongs to the ATPase epsilon chain family. F-type ATPases have 2 components, CF(1) - the catalytic core - and CF(0) - the membrane proton channel. CF(1) has five subunits: alpha(3), beta(3), gamma(1), delta(1), epsilon(1). CF(0) has three main subunits: a, b and c.

The protein resides in the plastid. The protein localises to the chloroplast thylakoid membrane. Produces ATP from ADP in the presence of a proton gradient across the membrane. This is ATP synthase epsilon chain, chloroplastic from Citrus sinensis (Sweet orange).